A 214-amino-acid chain; its full sequence is Large ribosomal subunit protein uL16 (214 aa).

Arginine 32 bears the Citrulline mark. Residue lysine 175 forms a Glycyl lysine isopeptide (Lys-Gly) (interchain with G-Cter in SUMO2) linkage. Lysine 188 participates in a covalent cross-link: Glycyl lysine isopeptide (Lys-Gly) (interchain with G-Cter in ubiquitin).

Belongs to the universal ribosomal protein uL16 family. As to quaternary structure, component of the large ribosomal subunit. Mature ribosomes consist of a small (40S) and a large (60S) subunit. The 40S subunit contains about 33 different proteins and 1 molecule of RNA (18S). The 60S subunit contains about 49 different proteins and 3 molecules of RNA (28S, 5.8S and 5S). Post-translationally, citrullinated by PADI4. In terms of processing, ufmylated by UFL1.

It localises to the cytoplasm. Its function is as follows. Component of the large ribosomal subunit. Plays a role in the formation of actively translating ribosomes. May play a role in the embryonic brain development. This Bos taurus (Bovine) protein is Large ribosomal subunit protein uL16.